The following is a 347-amino-acid chain: L-Ala-D/L-amino acid epimerase (347 aa).

Residue 156–158 (KLK) coordinates substrate. Mg(2+) contacts are provided by Asp183, Glu211, and Asp237. Residues Lys259 and 309-311 (DID) contribute to the substrate site.

Belongs to the mandelate racemase/muconate lactonizing enzyme family. The cofactor is Mg(2+).

In terms of biological role, dipeptide epimerase with a broad substrate specificity. Catalyzes the epimerization of L-Ala-L-Ala, L-Ala-L-Ser, L-Ala-L-Thr, L-Ala-L-Met, L-Ala-L-Phe, L-Ala-L-Tyr, L-Gly-L-Asp, L-Val-L-Asp, L-Val-L-Glu and L-Val-L-Phe (in vitro). Can also catalyze the epimerization of L-Ala-L-Glu, but with lower efficiency. The sequence is that of L-Ala-D/L-amino acid epimerase from Pedosphaera parvula (strain Ellin514).